We begin with the raw amino-acid sequence, 815 residues long: (-)-kolavenyl diphosphate synthase TPS28, chloroplastic (815 aa).

The N-terminal 51 residues, 1–51, are a transit peptide targeting the chloroplast; that stretch reads MFMSSSSSSHARRPQLSSFSYLHPPLPFPGLSFFNTRDKRVNFDSTRIICI. K247 is a binding site for substrate. 2 residues coordinate Mg(2+): D379 and D381. The DXDD motif signature appears at 379–382; the sequence is DIDD. K465 lines the substrate pocket.

Belongs to the terpene synthase family. Tpsc subfamily. Mg(2+) serves as cofactor.

It is found in the plastid. It localises to the chloroplast. It carries out the reaction (2E,6E,10E)-geranylgeranyl diphosphate = (-)-kolavenyl diphosphate. Inhibited by high concentrations of magnesium. Functionally, diterpene synthase that catalyzes the formation of (-)-kolavenyl diphosphate from geranylgeranyl diphosphate (GGPP). The sequence is that of (-)-kolavenyl diphosphate synthase TPS28, chloroplastic from Tripterygium wilfordii (Thunder God vine).